The sequence spans 306 residues: uncharacterized protein (306 aa).

It belongs to the asfivirus CP312R family.

It is found in the virion. This is an uncharacterized protein from African swine fever virus (isolate Pig/Kenya/KEN-50/1950) (ASFV).